We begin with the raw amino-acid sequence, 86 residues long: Large ribosomal subunit protein bL31B (86 aa).

This sequence belongs to the bacterial ribosomal protein bL31 family. Type B subfamily. As to quaternary structure, part of the 50S ribosomal subunit.

The chain is Large ribosomal subunit protein bL31B from Streptococcus agalactiae serotype III (strain NEM316).